Consider the following 560-residue polypeptide: Thermosome subunit alpha (560 aa).

Basic and acidic residues predominate over residues 535-547 (SEKKGGEGSKEES). Residues 535–560 (SEKKGGEGSKEESGGEGGAGTPSLGD) are disordered.

It belongs to the TCP-1 chaperonin family. Forms a heterooligomeric complex of two stacked nine-membered rings; one of alpha and the other of beta subunits. Sometimes called a 'rosettasome'.

It localises to the cytoplasm. It catalyses the reaction ATP + H2O = ADP + phosphate + H(+). Molecular chaperone; binds unfolded polypeptides in vitro, stimulates protein folding and has ATPase activity. One of the most abundant proteins in the cell at all temperatures. The protein is Thermosome subunit alpha (thsA) of Saccharolobus shibatae (strain ATCC 51178 / DSM 5389 / JCM 8931 / NBRC 15437 / B12) (Sulfolobus shibatae).